A 671-amino-acid chain; its full sequence is DNA ligase (671 aa).

NAD(+)-binding positions include 32–36 (DAEYD), 81–82 (SL), and Glu-113. Catalysis depends on Lys-115, which acts as the N6-AMP-lysine intermediate. NAD(+) is bound by residues Arg-136, Glu-173, Lys-290, and Lys-314. Positions 408, 411, 426, and 432 each coordinate Zn(2+). Residues 593–671 (EIDSPFAGKT…EAEMLRLLGS (79 aa)) enclose the BRCT domain.

This sequence belongs to the NAD-dependent DNA ligase family. LigA subfamily. Mg(2+) is required as a cofactor. Requires Mn(2+) as cofactor.

It carries out the reaction NAD(+) + (deoxyribonucleotide)n-3'-hydroxyl + 5'-phospho-(deoxyribonucleotide)m = (deoxyribonucleotide)n+m + AMP + beta-nicotinamide D-nucleotide.. Its function is as follows. DNA ligase that catalyzes the formation of phosphodiester linkages between 5'-phosphoryl and 3'-hydroxyl groups in double-stranded DNA using NAD as a coenzyme and as the energy source for the reaction. It is essential for DNA replication and repair of damaged DNA. The chain is DNA ligase from Shigella dysenteriae serotype 1 (strain Sd197).